The chain runs to 704 residues: Ribosomal RNA large subunit methyltransferase K/L (704 aa).

This sequence belongs to the methyltransferase superfamily. RlmKL family.

The protein resides in the cytoplasm. It catalyses the reaction guanosine(2445) in 23S rRNA + S-adenosyl-L-methionine = N(2)-methylguanosine(2445) in 23S rRNA + S-adenosyl-L-homocysteine + H(+). The catalysed reaction is guanosine(2069) in 23S rRNA + S-adenosyl-L-methionine = N(2)-methylguanosine(2069) in 23S rRNA + S-adenosyl-L-homocysteine + H(+). Its function is as follows. Specifically methylates the guanine in position 2445 (m2G2445) and the guanine in position 2069 (m7G2069) of 23S rRNA. In Alcanivorax borkumensis (strain ATCC 700651 / DSM 11573 / NCIMB 13689 / SK2), this protein is Ribosomal RNA large subunit methyltransferase K/L.